The following is a 466-amino-acid chain: Coagulation factor VII (466 aa).

The N-terminal stretch at 1–20 (MVSQALRLLCLLLGLQGCLA) is a signal peptide. A propeptide spanning residues 21–60 (AGGVAEASGGETRDMPWKPGPHRVFITQEEAHGVLHRRRR) is cleaved from the precursor. A Gla domain is found at 61–105 (ANAFLEELRPGSLERECKEEQCSFEEAREIFKDLERTKLFWISYS). 4-carboxyglutamate is present on residues Glu-66, Glu-67, Glu-74, Glu-76, Glu-79, Glu-80, Glu-85, Glu-86, Glu-89, and Glu-95. Cys-77 and Cys-82 are disulfide-bonded. The 37-residue stretch at 106 to 142 (DGDQCASSPCQNGGSCKDQLQSYICFCLPAFEGRNCE) folds into the EGF-like 1; calcium-binding domain. 10 cysteine pairs are disulfide-bonded: Cys-110–Cys-121, Cys-115–Cys-130, Cys-132–Cys-141, Cys-151–Cys-162, Cys-158–Cys-172, Cys-174–Cys-187, Cys-195–Cys-322, Cys-219–Cys-224, Cys-238–Cys-254, and Cys-370–Cys-389. O-linked (Glc...) serine; alternate glycosylation is present at Ser-112. A glycan (O-linked (Xyl...) serine; alternate) is linked at Ser-112. O-linked (Fuc) serine glycosylation occurs at Ser-120. Asp-123 is modified ((3R)-3-hydroxyaspartate). The 42-residue stretch at 147–188 (DQLICVNENGGCEQYCSDHTGTKRSCRCHEGYSLLADGVSCT) folds into the EGF-like 2 domain. N-linked (GlcNAc...) asparagine glycosylation occurs at Asn-205. Positions 213 to 452 (IVGGKVCPKG…YIEWLQKLMR (240 aa)) constitute a Peptidase S1 domain. Residues His-253 and Asp-302 each act as charge relay system in the active site. Asn-382 carries N-linked (GlcNAc...) asparagine glycosylation. Asp-398 is a substrate binding site. Cys-400 and Cys-428 are disulfide-bonded. The active-site Charge relay system is Ser-404.

Belongs to the peptidase S1 family. Heterodimer of a light chain and a heavy chain linked by a disulfide bond. Post-translationally, the vitamin K-dependent, enzymatic carboxylation of some glutamate residues allows the modified protein to bind calcium. In terms of processing, the iron and 2-oxoglutarate dependent 3-hydroxylation of aspartate and asparagine is (R) stereospecific within EGF domains. O-glycosylated. O-fucosylated by POFUT1 on a conserved serine or threonine residue found in the consensus sequence C2-X(4,5)-[S/T]-C3 of EGF domains, where C2 and C3 are the second and third conserved cysteines. Post-translationally, can be either O-glucosylated or O-xylosylated at Ser-112 by POGLUT1.

It localises to the secreted. It carries out the reaction Selective cleavage of Arg-|-Ile bond in factor X to form factor Xa.. Its function is as follows. Initiates the extrinsic pathway of blood coagulation. Serine protease that circulates in the blood in a zymogen form. Factor VII is converted to factor VIIa by factor Xa, factor XIIa, factor IXa, or thrombin by minor proteolysis. In the presence of tissue factor and calcium ions, factor VIIa then converts factor X to factor Xa by limited proteolysis. Factor VIIa also converts factor IX to factor IXa in the presence of tissue factor and calcium. In Pan paniscus (Pygmy chimpanzee), this protein is Coagulation factor VII (F7).